The sequence spans 147 residues: Large ribosomal subunit protein uL15 (147 aa).

The segment at 1-57 (MRLHDVKPQKGSKKRKKRVARGISAGQGASAGLGMRGQKSRSGSGTRPGFEGGQQPL) is disordered. The span at 10–20 (KGSKKRKKRVA) shows a compositional bias: basic residues.

It belongs to the universal ribosomal protein uL15 family. Part of the 50S ribosomal subunit.

Functionally, binds to the 23S rRNA. This chain is Large ribosomal subunit protein uL15, found in Nostoc punctiforme (strain ATCC 29133 / PCC 73102).